Reading from the N-terminus, the 471-residue chain is Collagenase 3 (471 aa).

The N-terminal stretch at 1-19 (MHPGVLAAFLFLSWTHCRA) is a signal peptide. A propeptide spans 20–103 (LPLPSGGDED…PRCGVPDVGE (84 aa)) (activation peptide). Residues 94-101 (PRCGVPDV) carry the Cysteine switch motif. Cys96 is a binding site for Zn(2+). A glycan (N-linked (GlcNAc...) asparagine) is linked at Asn117. Asp128 serves as a coordination point for Ca(2+). The N-linked (GlcNAc...) asparagine glycan is linked to Asn152. Residue Asp162 coordinates Ca(2+). Zn(2+) contacts are provided by His172 and Asp174. Positions 176–246 (YPFDGPSGLL…GALMFPIYTY (71 aa)) are interaction with TIMP2. The Ca(2+) site is built by Asp179, Gly180, Ser182, and Leu184. His187 serves as a coordination point for Zn(2+). The Ca(2+) site is built by Asn194, Gly196, and Asp198. His200 contributes to the Zn(2+) binding site. Residues Asp202, Asp203, and Glu205 each contribute to the Ca(2+) site. His222 provides a ligand contact to Zn(2+). The active site involves Glu223. 3 residues coordinate Zn(2+): His226, His232, and Met240. The segment at 263–284 (QSLYGPGDEDPNPKHPKTPDKC) is disordered. Positions 268 to 471 (PGDEDPNPKH…VMPANSILWC (204 aa)) are interaction with collagen. Over residues 273–284 (PNPKHPKTPDKC) the composition is skewed to basic and acidic residues. Hemopexin repeat units lie at residues 281-330 (PDKC…WPEL), 331-377 (PNRI…GLPK), 379-427 (VKKI…FPGI), and 428-471 (GDKV…ILWC). A disulfide bond links Cys284 and Cys471. Asp291, Ile293, Asp335, and Ala337 together coordinate Ca(2+). Phosphotyrosine; by PKDCC is present on Tyr366. Ser383, Ala385, Asp432, and Val434 together coordinate Ca(2+).

The protein belongs to the peptidase M10A family. Monomer. Interacts with TIMP1, TIMP2 and TIMP3. Binds (via the C-terminal region) to collagen. Ca(2+) is required as a cofactor. It depends on Zn(2+) as a cofactor. In terms of processing, the proenzyme is activated by removal of the propeptide; this cleavage can be effected by other matrix metalloproteinases, such as MMP2, MMP3 and MMP14 and may involve several cleavage steps. Cleavage can also be autocatalytic, after partial maturation by another protease or after treatment with 4-aminophenylmercuric acetate (APMA) (in vitro). N-glycosylated. Post-translationally, tyrosine phosphorylated by PKDCC/VLK. Detected in fetal cartilage and calvaria, in chondrocytes of hypertrophic cartilage in vertebrae and in the dorsal end of ribs undergoing ossification, as well as in osteoblasts and periosteal cells below the inner periosteal region of ossified ribs. Detected in chondrocytes from in joint cartilage that have been treated with TNF and IL1B, but not in untreated chondrocytes. Detected in T lymphocytes. Detected in breast carcinoma tissue.

It localises to the secreted. The protein localises to the extracellular space. The protein resides in the extracellular matrix. With respect to regulation, inhibited by TIMP1, TIMP2 and TIMP3. Inhibited by acetohydroxamic acid and other zinc chelators. Plays a role in the degradation of extracellular matrix proteins including fibrillar collagen, fibronectin, TNC and ACAN. Cleaves triple helical collagens, including type I, type II and type III collagen, but has the highest activity with soluble type II collagen. Can also degrade collagen type IV, type XIV and type X. May also function by activating or degrading key regulatory proteins, such as TGFB1 and CCN2. Plays a role in wound healing, tissue remodeling, cartilage degradation, bone development, bone mineralization and ossification. Required for normal embryonic bone development and ossification. Plays a role in the healing of bone fractures via endochondral ossification. Plays a role in wound healing, probably by a mechanism that involves proteolytic activation of TGFB1 and degradation of CCN2. Plays a role in keratinocyte migration during wound healing. May play a role in cell migration and in tumor cell invasion. The protein is Collagenase 3 (MMP13) of Homo sapiens (Human).